A 209-amino-acid polypeptide reads, in one-letter code: dITP/XTP pyrophosphatase (209 aa).

7-12 (SSHGYK) provides a ligand contact to substrate. Catalysis depends on aspartate 70, which acts as the Proton acceptor. Aspartate 70 contributes to the Mg(2+) binding site. Substrate is bound by residues serine 71, 154 to 157 (FGYD), lysine 177, and 182 to 183 (HR).

This sequence belongs to the HAM1 NTPase family. As to quaternary structure, homodimer. Mg(2+) serves as cofactor.

It catalyses the reaction XTP + H2O = XMP + diphosphate + H(+). The catalysed reaction is dITP + H2O = dIMP + diphosphate + H(+). It carries out the reaction ITP + H2O = IMP + diphosphate + H(+). Functionally, pyrophosphatase that catalyzes the hydrolysis of nucleoside triphosphates to their monophosphate derivatives, with a high preference for the non-canonical purine nucleotides XTP (xanthosine triphosphate), dITP (deoxyinosine triphosphate) and ITP. Seems to function as a house-cleaning enzyme that removes non-canonical purine nucleotides from the nucleotide pool, thus preventing their incorporation into DNA/RNA and avoiding chromosomal lesions. The protein is dITP/XTP pyrophosphatase of Chlamydia muridarum (strain MoPn / Nigg).